The primary structure comprises 551 residues: DEAD-box ATP-dependent RNA helicase 47, mitochondrial (551 aa).

The N-terminal 29 residues, 1 to 29 (MAASTSTRFLVLLKDFSAFRKISWTCAAT), are a transit peptide targeting the mitochondrion. A Q motif motif is present at residues 110–138 (KSFEELGLPDSLLDSLEREGFSVPTDVQS). Residues 141–340 (VPAIIKGHDA…KSWSHEPVLV (200 aa)) enclose the Helicase ATP-binding domain. Residue 154–161 (SYTGSGKT) coordinates ATP. A DEAD box motif is present at residues 274 to 277 (DEVD). The 152-residue stretch at 397-548 (TLRRCVHALD…ELVVTEEDKA (152 aa)) folds into the Helicase C-terminal domain.

It belongs to the DEAD box helicase family. Mostly expressed in leaves and flowers, and, to a lower extent, in roots, seedlings and siliques, especially in meristematic regions.

The protein resides in the mitochondrion. It catalyses the reaction ATP + H2O = ADP + phosphate + H(+). In terms of biological role, essential protein required during embryogenesis. Required for mitochondrial metabolism. Necessary for normal plasmodesmata (PD) development and aperture regulation. In Arabidopsis thaliana (Mouse-ear cress), this protein is DEAD-box ATP-dependent RNA helicase 47, mitochondrial (RH47).